We begin with the raw amino-acid sequence, 288 residues long: UDP-3-O-acyl-N-acetylglucosamine deacetylase (288 aa).

The Zn(2+) site is built by His-79, His-236, and Asp-240. His-263 acts as the Proton donor in catalysis.

The protein belongs to the LpxC family. Zn(2+) is required as a cofactor.

It carries out the reaction a UDP-3-O-[(3R)-3-hydroxyacyl]-N-acetyl-alpha-D-glucosamine + H2O = a UDP-3-O-[(3R)-3-hydroxyacyl]-alpha-D-glucosamine + acetate. It participates in glycolipid biosynthesis; lipid IV(A) biosynthesis; lipid IV(A) from (3R)-3-hydroxytetradecanoyl-[acyl-carrier-protein] and UDP-N-acetyl-alpha-D-glucosamine: step 2/6. Functionally, catalyzes the hydrolysis of UDP-3-O-myristoyl-N-acetylglucosamine to form UDP-3-O-myristoylglucosamine and acetate, the committed step in lipid A biosynthesis. The chain is UDP-3-O-acyl-N-acetylglucosamine deacetylase from Rickettsia conorii (strain ATCC VR-613 / Malish 7).